Reading from the N-terminus, the 175-residue chain is Adenylate kinase isoenzyme 6 homolog (175 aa).

Residues glycine 18, glycine 20, lysine 21, threonine 22, and threonine 23 each contribute to the ATP site. The tract at residues 38 to 61 (CIGDVVKENHLHFGFDEKWKTYDV) is NMPbind. Residues 113–123 (SRGYSLEKIQE) are LID. ATP is bound at residue arginine 114.

This sequence belongs to the adenylate kinase family. AK6 subfamily. In terms of assembly, interacts with small ribosomal subunit protein uS11. Not a structural component of 43S pre-ribosomes, but transiently interacts with them by binding to uS11.

It localises to the cytoplasm. The protein localises to the nucleus. The enzyme catalyses AMP + ATP = 2 ADP. It catalyses the reaction ATP + H2O = ADP + phosphate + H(+). Functionally, broad-specificity nucleoside monophosphate (NMP) kinase that catalyzes the reversible transfer of the terminal phosphate group between nucleoside triphosphates and monophosphates. Also has ATPase activity. Involved in the late cytoplasmic maturation steps of the 40S ribosomal particles, specifically 18S rRNA maturation. While NMP activity is not required for ribosome maturation, ATPase activity is. Associates transiently with small ribosomal subunit protein uS11. ATP hydrolysis breaks the interaction with uS11. May temporarily remove uS11 from the ribosome to enable a conformational change of the ribosomal RNA that is needed for the final maturation step of the small ribosomal subunit. Its NMP activity may have a role in nuclear energy homeostasis. The chain is Adenylate kinase isoenzyme 6 homolog (fap7) from Schizosaccharomyces pombe (strain 972 / ATCC 24843) (Fission yeast).